The sequence spans 389 residues: Lipid-A-disaccharide synthase (389 aa).

This sequence belongs to the LpxB family.

It carries out the reaction a lipid X + a UDP-2-N,3-O-bis[(3R)-3-hydroxyacyl]-alpha-D-glucosamine = a lipid A disaccharide + UDP + H(+). It functions in the pathway bacterial outer membrane biogenesis; LPS lipid A biosynthesis. Functionally, condensation of UDP-2,3-diacylglucosamine and 2,3-diacylglucosamine-1-phosphate to form lipid A disaccharide, a precursor of lipid A, a phosphorylated glycolipid that anchors the lipopolysaccharide to the outer membrane of the cell. In Verminephrobacter eiseniae (strain EF01-2), this protein is Lipid-A-disaccharide synthase.